A 109-amino-acid polypeptide reads, in one-letter code: MNTFLFPTLCLLGVWAALAGGVTVKDGEFSFSLESVKKLKDLQELQKPRNPRNLDGPIIPVLCNSPKFPEELKPICQKPNAEEILERLETIAQDPSTCEICAYAACAGC.

A signal peptide spans Met1–Gly21. The propeptide occupies Val22 to Asp94. 3 disulfides stabilise this stretch: Cys63-Cys76, Cys98-Cys106, and Cys101-Cys109.

Belongs to the guanylin family.

The protein localises to the secreted. Functionally, endogenous activator of intestinal guanylate cyclase. It stimulates this enzyme through the same receptor binding region as the heat-stable enterotoxins. This Sus scrofa (Pig) protein is Guanylin (GUCA2A).